The sequence spans 504 residues: Glycerol kinase (504 aa).

Threonine 12 serves as a coordination point for ADP. Positions 12, 13, and 14 each coordinate ATP. Threonine 12 is a sn-glycerol 3-phosphate binding site. Arginine 16 contacts ADP. Sn-glycerol 3-phosphate-binding residues include arginine 82, glutamate 83, tyrosine 134, and aspartate 246. Arginine 82, glutamate 83, tyrosine 134, aspartate 246, and glutamine 247 together coordinate glycerol. Residues threonine 268 and glycine 312 each contribute to the ADP site. Threonine 268, glycine 312, glutamine 316, and glycine 413 together coordinate ATP. 2 residues coordinate ADP: glycine 413 and asparagine 417.

The protein belongs to the FGGY kinase family.

It catalyses the reaction glycerol + ATP = sn-glycerol 3-phosphate + ADP + H(+). It participates in polyol metabolism; glycerol degradation via glycerol kinase pathway; sn-glycerol 3-phosphate from glycerol: step 1/1. Its activity is regulated as follows. Inhibited by fructose 1,6-bisphosphate (FBP). In terms of biological role, key enzyme in the regulation of glycerol uptake and metabolism. Catalyzes the phosphorylation of glycerol to yield sn-glycerol 3-phosphate. In Paenarthrobacter aurescens (strain TC1), this protein is Glycerol kinase.